The following is a 399-amino-acid chain: 3-sulfinopropanoyl-CoA desulfinase (399 aa).

FAD-binding positions include 121–124 (ICIS), Ser130, and 153–156 (YWIT). Substrate is bound at residue 244 to 245 (YN). FAD is bound by residues Arg273, Gln340, Ser344, 367-371 (GGTAQ), and Gln388.

This sequence belongs to the acyl-CoA dehydrogenase family. In terms of assembly, homotrimer or homotetramer. It depends on FAD as a cofactor.

It carries out the reaction 3-sulfinopropanoyl-CoA + H2O = propanoyl-CoA + sulfite + H(+). In terms of biological role, catalyzes the conversion 3-sulfinopropanoyl-CoA (3SP-CoA) to propanoyl-CoA by abstraction of sulfite. Does not show dehydrogenase activity. This Variovorax paradoxus protein is 3-sulfinopropanoyl-CoA desulfinase.